Here is a 65-residue protein sequence, read N- to C-terminus: Large ribosomal subunit protein bL32 (65 aa).

Residues 1–45 form a disordered region; the sequence is MAVQQNKKTPSKRGMRRAHDVLKKPTFSVDFSSGETHRRHHVTPD.

It belongs to the bacterial ribosomal protein bL32 family.

The sequence is that of Large ribosomal subunit protein bL32 from Nitrosococcus oceani (strain ATCC 19707 / BCRC 17464 / JCM 30415 / NCIMB 11848 / C-107).